Here is a 527-residue protein sequence, read N- to C-terminus: MRQLISPEALRAFRQSVQGSVGFVPTMGALHAGHRSLIERSRQQDDVVIVSIFVNPRQFGPQEDLSRYPQTLDADLALCEAAGVDAVFCPTAEALYPRPSDRSTGVQPPAELIQSLCGRQRPGHFQGVATVVLKLLQLVQPQRAYFGEKDAQQLRVIQRLVEDFNLPIAIVPCPTVREPDGLALSSRNRYLTFEERSQASGLYRALRAAAECFQAGSRDSQELVAAATAVLATTPAVQLEYCDCVDADSLQPLTQIPDRALLAIAARVGTARLIDNLTLQGRRPIIAIDGPAGAGKSTVTKRLAQQLGLLYLDTGAMYRAVTWLVQQQGIDPQDPIVLAELLAQADLQLRSQPAADGSEQLQVLIQGNDVTAAIRTPTVTAQVSAIAALPLVRQFLVEQQRQLGQRGGLVAEGRDIGTHVFPDAELKIFLTATNAERARRRALDLEAQGLTVDLAQLEAEIRDRDRQDSERAIAPLCKAEDAVEVLTDGLSIEAVTDQIIRLYRDRGLGDSSPQATPGQTPSPLSLG.

A pantoate--beta-alanine ligase region spans residues 1-277 (MRQLISPEAL…VGTARLIDNL (277 aa)). An ATP-binding site is contributed by 27–34 (MGALHAGH). The active-site Proton donor is H34. Position 58 (Q58) interacts with (R)-pantoate. Q58 provides a ligand contact to beta-alanine. ATP is bound at residue 147–150 (GEKD). Q153 lines the (R)-pantoate pocket. Residues V176 and 184 to 187 (LSSR) contribute to the ATP site. The segment at 278–527 (TLQGRRPIIA…GQTPSPLSLG (250 aa)) is cytidylate kinase. The tract at residues 507–527 (GLGDSSPQATPGQTPSPLSLG) is disordered. The segment covering 511–527 (SSPQATPGQTPSPLSLG) has biased composition (polar residues).

It in the N-terminal section; belongs to the pantothenate synthetase family. In the C-terminal section; belongs to the cytidylate kinase family. Type 1 subfamily.

The protein localises to the cytoplasm. It catalyses the reaction (R)-pantoate + beta-alanine + ATP = (R)-pantothenate + AMP + diphosphate + H(+). The catalysed reaction is CMP + ATP = CDP + ADP. It carries out the reaction dCMP + ATP = dCDP + ADP. It functions in the pathway cofactor biosynthesis; (R)-pantothenate biosynthesis; (R)-pantothenate from (R)-pantoate and beta-alanine: step 1/1. In terms of biological role, catalyzes the condensation of pantoate with beta-alanine in an ATP-dependent reaction via a pantoyl-adenylate intermediate. Functionally, catalyzes the transfer of a phosphate group from ATP to either CMP or dCMP to form CDP or dCDP and ADP, respectively. The chain is Bifunctional pantoate ligase/cytidylate kinase from Synechococcus elongatus (strain ATCC 33912 / PCC 7942 / FACHB-805) (Anacystis nidulans R2).